The primary structure comprises 435 residues: tRNA modification GTPase MnmE (435 aa).

3 residues coordinate (6S)-5-formyl-5,6,7,8-tetrahydrofolate: Arg-20, Glu-77, and Lys-117. A TrmE-type G domain is found at 214 to 359 (GFKIVIVGAP…FMKELESFCL (146 aa)). Residues 224–229 (NSGKSS), 243–249 (TEEAGTT), and 268–271 (DTAG) each bind GTP. Positions 228 and 249 each coordinate Mg(2+). Position 435 (Lys-435) interacts with (6S)-5-formyl-5,6,7,8-tetrahydrofolate.

It belongs to the TRAFAC class TrmE-Era-EngA-EngB-Septin-like GTPase superfamily. TrmE GTPase family. As to quaternary structure, homodimer. Heterotetramer of two MnmE and two MnmG subunits. The cofactor is K(+).

The protein localises to the cytoplasm. Its function is as follows. Exhibits a very high intrinsic GTPase hydrolysis rate. Involved in the addition of a carboxymethylaminomethyl (cmnm) group at the wobble position (U34) of certain tRNAs, forming tRNA-cmnm(5)s(2)U34. The chain is tRNA modification GTPase MnmE from Bartonella henselae (strain ATCC 49882 / DSM 28221 / CCUG 30454 / Houston 1) (Rochalimaea henselae).